Consider the following 544-residue polypeptide: Chaperonin GroEL (544 aa).

ATP is bound by residues 30 to 33 (TLGP), Lys-51, 87 to 91 (DGTTT), Gly-415, and Asp-495.

It belongs to the chaperonin (HSP60) family. In terms of assembly, forms a cylinder of 14 subunits composed of two heptameric rings stacked back-to-back. Interacts with the co-chaperonin GroES.

It localises to the cell outer membrane. The catalysed reaction is ATP + H2O + a folded polypeptide = ADP + phosphate + an unfolded polypeptide.. Together with its co-chaperonin GroES, plays an essential role in assisting protein folding. The GroEL-GroES system forms a nano-cage that allows encapsulation of the non-native substrate proteins and provides a physical environment optimized to promote and accelerate protein folding. This is Chaperonin GroEL from Neisseria gonorrhoeae.